Reading from the N-terminus, the 377-residue chain is tRNA-splicing endonuclease subunit SEN2 (377 aa).

Positions glutamate 119 to arginine 174 form a coiled coil. Catalysis depends on residues tyrosine 289, histidine 297, and lysine 328.

It belongs to the tRNA-intron endonuclease family. In terms of assembly, heterotetramer composed of SEN2, SEN15, SEN34 and SEN54. Interacts directly with SEN54.

The protein localises to the nucleus. It is found in the endomembrane system. Its subcellular location is the mitochondrion outer membrane. The enzyme catalyses pretRNA = a 3'-half-tRNA molecule with a 5'-OH end + a 5'-half-tRNA molecule with a 2',3'-cyclic phosphate end + an intron with a 2',3'-cyclic phosphate and a 5'-hydroxyl terminus.. In terms of biological role, constitutes one of the two catalytic subunit of the tRNA-splicing endonuclease complex, a complex responsible for identification and cleavage of the splice sites in pre-tRNA. It cleaves pre-tRNA at the 5'- and 3'-splice sites to release the intron. The products are an intron and two tRNA half-molecules bearing 2',3'-cyclic phosphate and 5'-OH termini. There are no conserved sequences at the splice sites, but the intron is invariably located at the same site in the gene, placing the splice sites an invariant distance from the constant structural features of the tRNA body. This subunit may anchor the endonuclease complex to the nuclear membrane. Probably carries the active site for 5'-splice site cleavage. In Saccharomyces cerevisiae (strain ATCC 204508 / S288c) (Baker's yeast), this protein is tRNA-splicing endonuclease subunit SEN2 (SEN2).